Consider the following 331-residue polypeptide: Thiamine thiazole synthase (331 aa).

Substrate is bound by residues Cys-86, 107 to 108 (EA), Gly-115, and Val-183. Cys-220 bears the 2,3-didehydroalanine (Cys) mark. Substrate is bound by residues Asp-222, His-237, Met-289, and 299 to 301 (RMG).

This sequence belongs to the THI4 family. As to quaternary structure, homooctamer. Fe cation serves as cofactor. In terms of processing, during the catalytic reaction, a sulfide is transferred from Cys-220 to a reaction intermediate, generating a dehydroalanine residue.

Its subcellular location is the cytoplasm. The protein localises to the nucleus. It carries out the reaction [ADP-thiazole synthase]-L-cysteine + glycine + NAD(+) = [ADP-thiazole synthase]-dehydroalanine + ADP-5-ethyl-4-methylthiazole-2-carboxylate + nicotinamide + 3 H2O + 2 H(+). Its function is as follows. Involved in biosynthesis of the thiamine precursor thiazole. Catalyzes the conversion of NAD and glycine to adenosine diphosphate 5-(2-hydroxyethyl)-4-methylthiazole-2-carboxylic acid (ADT), an adenylated thiazole intermediate. The reaction includes an iron-dependent sulfide transfer from a conserved cysteine residue of the protein to a thiazole intermediate. The enzyme can only undergo a single turnover, which suggests it is a suicide enzyme. May have additional roles in adaptation to various stress conditions and in DNA damage tolerance. This chain is Thiamine thiazole synthase, found in Emericella nidulans (strain FGSC A4 / ATCC 38163 / CBS 112.46 / NRRL 194 / M139) (Aspergillus nidulans).